We begin with the raw amino-acid sequence, 582 residues long: Threonine--tRNA ligase (582 aa).

The segment at D185–P478 is catalytic. C278, H329, and H455 together coordinate Zn(2+).

This sequence belongs to the class-II aminoacyl-tRNA synthetase family. In terms of assembly, homodimer. The cofactor is Zn(2+).

It localises to the cytoplasm. The enzyme catalyses tRNA(Thr) + L-threonine + ATP = L-threonyl-tRNA(Thr) + AMP + diphosphate + H(+). Functionally, catalyzes the attachment of threonine to tRNA(Thr) in a two-step reaction: L-threonine is first activated by ATP to form Thr-AMP and then transferred to the acceptor end of tRNA(Thr). Also edits incorrectly charged L-seryl-tRNA(Thr). The protein is Threonine--tRNA ligase of Dehalococcoides mccartyi (strain CBDB1).